Here is a 130-residue protein sequence, read N- to C-terminus: U-scoloptoxin(17)-Er1a (130 aa).

A signal peptide spans 1-18 (MKLLVFALFLQVVQLSLA).

It belongs to the scoloptoxin-17 family. Post-translationally, contains 4 disulfide bonds. As to expression, expressed by the venom gland.

It localises to the secreted. The polypeptide is U-scoloptoxin(17)-Er1a (Ethmostigmus rubripes (Giant centipede)).